Consider the following 548-residue polypeptide: Sesquiterpene synthase TPS1 (548 aa).

(2E,6E)-farnesyl diphosphate contacts are provided by Arg264, Asp301, Asp305, Arg442, and Asp445. Residues Asp301 and Asp305 each coordinate Mg(2+). The DDXXD motif signature appears at 301–305; sequence DDTYD. 2 residues coordinate Mg(2+): Asp445 and Glu453.

Belongs to the terpene synthase family. Tpsa subfamily. In terms of assembly, monomer. Mg(2+) serves as cofactor. In terms of tissue distribution, expressed in leaves and stems.

The protein localises to the cytoplasm. It catalyses the reaction (2E,6E)-farnesyl diphosphate = germacrene D + diphosphate. The catalysed reaction is (2E,6E)-farnesyl diphosphate = (-)-(E)-beta-caryophyllene + diphosphate. It carries out the reaction (2E,6E)-farnesyl diphosphate = beta-copaene + diphosphate. It functions in the pathway secondary metabolite biosynthesis; terpenoid biosynthesis. In terms of biological role, sesquiterpene synthase involved in the biosynthesis of volatile compounds. Mediates the conversion of (2E,6E)-farnesyl diphosphate (FPP) into germacrene D, (-)-(E)-beta-caryophyllene and beta-copaene. In Xanthium strumarium (Rough cocklebur), this protein is Sesquiterpene synthase TPS1.